The chain runs to 526 residues: GMP synthase [glutamine-hydrolyzing] (526 aa).

One can recognise a Glutamine amidotransferase type-1 domain in the interval 8–208 (CILIIDFGSQ…AVDICRCEVT (201 aa)). Cys85 serves as the catalytic Nucleophile. Residues His182 and Glu184 contribute to the active site. Residues 209 to 401 (WKPVYIVKNI…LGLPLNVVNQ (193 aa)) form the GMPS ATP-PPase domain. Position 236 to 242 (236 to 242 (SGGIDSL)) interacts with ATP.

In terms of assembly, homodimer.

The catalysed reaction is XMP + L-glutamine + ATP + H2O = GMP + L-glutamate + AMP + diphosphate + 2 H(+). It participates in purine metabolism; GMP biosynthesis; GMP from XMP (L-Gln route): step 1/1. Its function is as follows. Catalyzes the synthesis of GMP from XMP. The sequence is that of GMP synthase [glutamine-hydrolyzing] from Blochmanniella floridana.